Consider the following 479-residue polypeptide: Glutamyl-tRNA reductase (479 aa).

Substrate-binding positions include 49-52, serine 109, 114-116, and glutamine 120; these read TCNR and EQQ. Cysteine 50 acts as the Nucleophile in catalysis. 191–196 contributes to the NADP(+) binding site; sequence GAGSMG.

The protein belongs to the glutamyl-tRNA reductase family. As to quaternary structure, homodimer.

It catalyses the reaction (S)-4-amino-5-oxopentanoate + tRNA(Glu) + NADP(+) = L-glutamyl-tRNA(Glu) + NADPH + H(+). The protein operates within porphyrin-containing compound metabolism; protoporphyrin-IX biosynthesis; 5-aminolevulinate from L-glutamyl-tRNA(Glu): step 1/2. Its function is as follows. Catalyzes the NADPH-dependent reduction of glutamyl-tRNA(Glu) to glutamate 1-semialdehyde (GSA). In Rhodococcus jostii (strain RHA1), this protein is Glutamyl-tRNA reductase.